Reading from the N-terminus, the 334-residue chain is Beta-hexosaminidase (334 aa).

Residues aspartate 60, arginine 68, arginine 133, and 163 to 164 (KH) each bind substrate. The active-site Proton donor/acceptor is the histidine 176. The active-site Nucleophile is the aspartate 247.

Belongs to the glycosyl hydrolase 3 family. NagZ subfamily.

Its subcellular location is the cytoplasm. The enzyme catalyses Hydrolysis of terminal non-reducing N-acetyl-D-hexosamine residues in N-acetyl-beta-D-hexosaminides.. Its pathway is cell wall biogenesis; peptidoglycan recycling. In terms of biological role, plays a role in peptidoglycan recycling by cleaving the terminal beta-1,4-linked N-acetylglucosamine (GlcNAc) from peptide-linked peptidoglycan fragments, giving rise to free GlcNAc, anhydro-N-acetylmuramic acid and anhydro-N-acetylmuramic acid-linked peptides. This is Beta-hexosaminidase from Xanthomonas oryzae pv. oryzae (strain KACC10331 / KXO85).